The chain runs to 381 residues: MYG1 exonuclease (381 aa).

Residues 1–47 (MGRGFLRGVLTLLPLRSVLQVQHCMLVSEPDLPPKRPRNNLMAPPRI) constitute a mitochondrion transit peptide. An N6-acetyllysine mark is found at K267 and K273.

Belongs to the MYG1 family.

It is found in the nucleus. The protein resides in the nucleoplasm. The protein localises to the mitochondrion matrix. It localises to the nucleolus. Its function is as follows. 3'-5' RNA exonuclease which cleaves in situ on specific transcripts in both nucleus and mitochondrion. Involved in regulating spatially segregated organellar RNA processing, acts as a coordinator of nucleo-mitochondrial crosstalk. In nucleolus, processes pre-ribosomal RNA involved in ribosome assembly and alters cytoplasmic translation. In mitochondrial matrix, processes 3'-termini of the mito-ribosomal and messenger RNAs and controls translation of mitochondrial proteins. In Rattus norvegicus (Rat), this protein is MYG1 exonuclease.